A 120-amino-acid polypeptide reads, in one-letter code: UPF0102 protein FRAAL5785 (120 aa).

The protein belongs to the UPF0102 family.

The protein is UPF0102 protein FRAAL5785 of Frankia alni (strain DSM 45986 / CECT 9034 / ACN14a).